Consider the following 464-residue polypeptide: Properdin (464 aa).

Residues 1–22 (MPAEMQAPQWLLLLLVILPATG) form the signal peptide. TSP type-1 domains follow at residues 24–72 (DPVL…QACR), 73–130 (SPQW…PCCP), 132–187 (MGGW…KTCP), 189–251 (HGAW…PPCP), 253–309 (AGGW…VPCP), 311–372 (NGEW…HNCI), and 374–457 (KGSW…PVCK). 3 disulfide bridges follow: Cys-28–Cys-52, Cys-39–Cys-68, and Cys-53–Cys-71. C-linked (Man) tryptophan glycans are attached at residues Trp-79 and Trp-82. 7 cysteine pairs are disulfide-bonded: Cys-85–Cys-123, Cys-89–Cys-129, Cys-100–Cys-107, Cys-128–Cys-166, Cys-144–Cys-180, Cys-148–Cys-186, and Cys-159–Cys-170. C-linked (Man) tryptophan glycosylation is found at Trp-135, Trp-138, and Trp-141. Thr-147 is a glycosylation site (O-linked (Fuc...) threonine). Residues Trp-192, Trp-195, and Trp-198 are each glycosylated (C-linked (Man) tryptophan). Intrachain disulfides connect Cys-201–Cys-244, Cys-205–Cys-250, and Cys-220–Cys-234. O-linked (Fuc...) serine glycosylation occurs at Ser-204. C-linked (Man) tryptophan glycosylation is found at Trp-256 and Trp-259. Disulfide bonds link Cys-265–Cys-302, Cys-269–Cys-308, and Cys-280–Cys-292. A glycan (O-linked (Fuc...) threonine) is linked at Thr-268. Trp-317 and Trp-320 each carry a C-linked (Man) tryptophan glycan. Cystine bridges form between Cys-323/Cys-365, Cys-332/Cys-371, and Cys-345/Cys-355. Residues 346–354 (GGRKFNGKP) form an interaction with Complement C3 beta chain region. Residues Trp-377, Trp-380, and Trp-383 are each glycosylated (C-linked (Man) tryptophan). Disulfide bonds link Cys-386–Cys-450, Cys-390–Cys-456, and Cys-402–Cys-434. N-linked (GlcNAc...) asparagine glycosylation occurs at Asn-423.

As to quaternary structure, in plasma, properdin exists as dimers, trimers or tetramers in the relative proportions of 26:54:20. Interacts with the pro-C3-convertase enzyme complex (C3b-Bb) comprised of Complement C3 beta chain (C3b) and the Complement factor B Bb fragment (Bb), where it binds (via its TSP type-1 5 domain) with C3b and Bb. This interaction stabilizes the complex and allows it to become the active C3-convertase enzyme complex (C3b-Bb-FP). Interacts with C3b. Interacts with CFB.

The protein resides in the secreted. Functionally, a positive regulator of the alternate pathway of complement. It binds to and stabilizes the C3- and C5-convertase enzyme complexes. Inhibits CFI-CFH mediated degradation of Inhibits CFI-CFH mediated degradation of Complement C3 beta chain (C3b). The chain is Properdin (Cfp) from Mus musculus (Mouse).